Here is a 515-residue protein sequence, read N- to C-terminus: Endoglucanase 2 (515 aa).

The first 31 residues, 1–31 (MVAKPRSRCCCCSVFIGVIILIAIIIAVIFT), serve as a signal peptide directing secretion. N-linked (GlcNAc...) asparagine glycosylation occurs at Asn37. Residue Asp100 is the Nucleophile of the active site. Asn250 is a glycosylation site (N-linked (GlcNAc...) asparagine). The active site involves His433. An N-linked (GlcNAc...) asparagine glycan is attached at Asn475. Asp480 is a catalytic residue. Asn483 carries N-linked (GlcNAc...) asparagine glycosylation. Residue Glu489 is part of the active site.

This sequence belongs to the glycosyl hydrolase 9 (cellulase E) family.

The protein localises to the secreted. It catalyses the reaction Endohydrolysis of (1-&gt;4)-beta-D-glucosidic linkages in cellulose, lichenin and cereal beta-D-glucans.. This chain is Endoglucanase 2, found in Arabidopsis thaliana (Mouse-ear cress).